A 312-amino-acid chain; its full sequence is Olfactory receptor 5P4 (312 aa).

Over 1–25 the chain is Extracellular; sequence METENDTMVTEFIILGLTDSATLRA. The N-linked (GlcNAc...) asparagine glycan is linked to N5. A helical transmembrane segment spans residues 26-46; the sequence is ILFVFFLPVYIVTVVGNISII. Topologically, residues 47–54 are cytoplasmic; it reads LLIRSSPQ. A helical membrane pass occupies residues 55–75; that stretch reads LHTPMYLFLSHLAFVDIGYST. Topologically, residues 76-99 are extracellular; sequence SVTPIMLISFLREETTIPLAGCAA. C97 and C189 are joined by a disulfide. Residues 100-120 traverse the membrane as a helical segment; sequence QLGSDVAFGTTECFLLATMAY. The Cytoplasmic portion of the chain corresponds to 121–133; sequence DRYVAICSPLLYS. A helical transmembrane segment spans residues 134–154; sequence TQMSPAICCFLLGASYLGGCM. Topologically, residues 155–196 are extracellular; that stretch reads NASSFTGCFVNLNFCGPNKVNHFFCDLFPLVKLSCGHAYIAE. The helical transmembrane segment at 197–217 threads the bilayer; sequence ISPSISSASVLVSTLSTIIVS. The Cytoplasmic segment spans residues 218-237; it reads YIYILHSILRMRSAEGRNKA. A helical transmembrane segment spans residues 238 to 258; sequence FSTCTSHLTAVTLFYGTVLFV. The Extracellular segment spans residues 259-271; sequence YVMPKSSYSADQV. A helical membrane pass occupies residues 272–292; sequence KVASVVYTVVIPMLNPLIYSL. The Cytoplasmic segment spans residues 293–312; sequence RNKEVKEAMKKLMARTHWFP.

Belongs to the G-protein coupled receptor 1 family.

It is found in the cell membrane. Its function is as follows. Potential odorant receptor. This Mus musculus (Mouse) protein is Olfactory receptor 5P4.